The primary structure comprises 361 residues: Phosphoserine aminotransferase (361 aa).

An L-glutamate-binding site is contributed by Arg-43. Residues 77–78 (AS), Trp-103, Thr-153, Asp-173, and Gln-196 contribute to the pyridoxal 5'-phosphate site. N6-(pyridoxal phosphate)lysine is present on Lys-197. 238–239 (NT) provides a ligand contact to pyridoxal 5'-phosphate.

This sequence belongs to the class-V pyridoxal-phosphate-dependent aminotransferase family. SerC subfamily. In terms of assembly, homodimer. Pyridoxal 5'-phosphate is required as a cofactor.

It localises to the cytoplasm. The enzyme catalyses O-phospho-L-serine + 2-oxoglutarate = 3-phosphooxypyruvate + L-glutamate. It carries out the reaction 4-(phosphooxy)-L-threonine + 2-oxoglutarate = (R)-3-hydroxy-2-oxo-4-phosphooxybutanoate + L-glutamate. It participates in amino-acid biosynthesis; L-serine biosynthesis; L-serine from 3-phospho-D-glycerate: step 2/3. Its pathway is cofactor biosynthesis; pyridoxine 5'-phosphate biosynthesis; pyridoxine 5'-phosphate from D-erythrose 4-phosphate: step 3/5. Catalyzes the reversible conversion of 3-phosphohydroxypyruvate to phosphoserine and of 3-hydroxy-2-oxo-4-phosphonooxybutanoate to phosphohydroxythreonine. The polypeptide is Phosphoserine aminotransferase (Pseudomonas putida (strain ATCC 47054 / DSM 6125 / CFBP 8728 / NCIMB 11950 / KT2440)).